Here is a 456-residue protein sequence, read N- to C-terminus: Flagellum-specific ATP synthase (456 aa).

A182–S189 lines the ATP pocket.

Belongs to the ATPase alpha/beta chains family.

It is found in the cytoplasm. The enzyme catalyses ATP + H2O + 4 H(+)(in) = ADP + phosphate + 5 H(+)(out). Functionally, probable catalytic subunit of a protein translocase for flagellum-specific export, or a proton translocase involved in local circuits at the flagellum. May be involved in a specialized protein export pathway that proceeds without signal peptide cleavage. In Salmonella typhimurium (strain LT2 / SGSC1412 / ATCC 700720), this protein is Flagellum-specific ATP synthase (fliI).